Reading from the N-terminus, the 251-residue chain is Flagellar L-ring protein (251 aa).

Positions 1 to 17 (MIRKLAALIVAAAALQA) are cleaved as a signal peptide. Cys18 is lipidated: N-palmitoyl cysteine. Cys18 is lipidated: S-diacylglycerol cysteine.

This sequence belongs to the FlgH family. The basal body constitutes a major portion of the flagellar organelle and consists of four rings (L,P,S, and M) mounted on a central rod.

It localises to the cell outer membrane. The protein resides in the bacterial flagellum basal body. In terms of biological role, assembles around the rod to form the L-ring and probably protects the motor/basal body from shearing forces during rotation. The polypeptide is Flagellar L-ring protein (Maricaulis maris (strain MCS10) (Caulobacter maris)).